The chain runs to 316 residues: Uracil-DNA glycosylase (316 aa).

The span at 36 to 79 shows a compositional bias: low complexity; the sequence is AAAAAPAGAGAGASKPARPSAAARPAKGTPAASAATTATGADAS. Residues 36-91 are disordered; it reads AAAAAPAGAGAGASKPARPSAAARPAKGTPAASAATTATGADASAPPPDPGAPTWD. The Proton acceptor role is filled by aspartate 159.

It belongs to the uracil-DNA glycosylase (UDG) superfamily. UNG family.

It is found in the host nucleus. It catalyses the reaction Hydrolyzes single-stranded DNA or mismatched double-stranded DNA and polynucleotides, releasing free uracil.. Excises uracil residues from the DNA which can arise as a result of misincorporation of dUMP residues by DNA polymerase or deamination of cytosines. Therefore may reduce deleterious uracil incorporation into the viral genome, particularly in terminally differentiated cells which lack DNA repair enzymes. In Sus scrofa (Pig), this protein is Uracil-DNA glycosylase (UL2).